The sequence spans 91 residues: Small ribosomal subunit protein bS20 (91 aa).

Residues 1–18 (MPLHKSAEKRLRQSERRN) are compositionally biased toward basic and acidic residues. The segment at 1 to 25 (MPLHKSAEKRLRQSERRNARNRARK) is disordered.

The protein belongs to the bacterial ribosomal protein bS20 family.

In terms of biological role, binds directly to 16S ribosomal RNA. The protein is Small ribosomal subunit protein bS20 of Chlorobium luteolum (strain DSM 273 / BCRC 81028 / 2530) (Pelodictyon luteolum).